Consider the following 751-residue polypeptide: Methionine--tRNA ligase, cytoplasmic (751 aa).

N-acetylserine is present on serine 2. The tract at residues 36-92 (LKPEVDNDNAAMELRNTKEPFLLFDANAILRYVMDDFEGQTSDKYQFALASLQNLLY) is interaction with ARC1. Positions 205–215 (PYVNNVPHLGN) match the 'HIGH' region motif. Position 411 (lysine 411) interacts with ATP. The 'KMSKS' region signature appears at 525–529 (KFSKS).

The protein belongs to the class-I aminoacyl-tRNA synthetase family. In terms of assembly, component of a yeast aminoacyl-tRNA synthase (aaRS) complex formed by methionyl-tRNA synthase MES1, glutamyl-tRNA synthase GUS1 and the tRNA aminoacylation cofactor ARC1 in a stoichiometric complex. Interacts (via N-ter) with ARC1 (via N-ter). Can also form a stable binary complex with ARC1 that is functional in terms of aminoacylation. ARC1 increases the affinity for cognate tRNAs due to the presence of a tRNA binding domain in the middle and C-terminal part of ARC1.

It localises to the cytoplasm. It catalyses the reaction tRNA(Met) + L-methionine + ATP = L-methionyl-tRNA(Met) + AMP + diphosphate. Functionally, catalyzes the attachment of methionine to tRNA(Met) in a two-step reaction: methionine is first activated by ATP to form Met-AMP and then transferred to the acceptor end of tRNA(Met). The protein is Methionine--tRNA ligase, cytoplasmic (MES1) of Saccharomyces cerevisiae (strain ATCC 204508 / S288c) (Baker's yeast).